A 304-amino-acid chain; its full sequence is Acetyl-coenzyme A carboxylase carboxyl transferase subunit beta (304 aa).

The CoA carboxyltransferase N-terminal domain maps to 29 to 298 (LWSKCESCGA…ASDVSPAAVP (270 aa)). 4 residues coordinate Zn(2+): Cys33, Cys36, Cys52, and Cys55. Residues 33-55 (CESCGALTYTKDLRANQMVCLEC) form a C4-type zinc finger.

Belongs to the AccD/PCCB family. In terms of assembly, acetyl-CoA carboxylase is a heterohexamer composed of biotin carboxyl carrier protein (AccB), biotin carboxylase (AccC) and two subunits each of ACCase subunit alpha (AccA) and ACCase subunit beta (AccD). Zn(2+) serves as cofactor.

The protein resides in the cytoplasm. It carries out the reaction N(6)-carboxybiotinyl-L-lysyl-[protein] + acetyl-CoA = N(6)-biotinyl-L-lysyl-[protein] + malonyl-CoA. It participates in lipid metabolism; malonyl-CoA biosynthesis; malonyl-CoA from acetyl-CoA: step 1/1. Functionally, component of the acetyl coenzyme A carboxylase (ACC) complex. Biotin carboxylase (BC) catalyzes the carboxylation of biotin on its carrier protein (BCCP) and then the CO(2) group is transferred by the transcarboxylase to acetyl-CoA to form malonyl-CoA. This chain is Acetyl-coenzyme A carboxylase carboxyl transferase subunit beta, found in Acaryochloris marina (strain MBIC 11017).